Consider the following 437-residue polypeptide: MNYTTQMDAAKKGIVTKEMEIVAKKENMNVKDLMELVSKGKVAIPANKNHKSLDPEGIGQGLRTKINVNLGISKDCYNIDMELEKVQKAIDMKAEAIMDLSCFGKTEEFRKRLIDMSPAIIGTVPIYDAVGFYDKELKDITSEEFLKVAEKHVENGADFLTIHVGMNRKTASTFKKNPRRMNIVSRGGSLLYAWMELNNKENPFYERFDELLDICEKYDVTLSLGDACRPGCIEDSTDASQIEELIALGELTKRAWDRNVQVIIEGPGHMTLDEIETNMKIEKKLCHGAPFYVLGPIVTDIAPGYDHITSAIGGAIAATHGADFLCYVTPAEHLRLPNLDDMKEGIIATKIAAHAADLAKGVKGARDWDNAMAKARRDLDWERMFELSIDEEKARRYREESKAKSKDSCTMCGKMCAVRNMNRVTEGKDLNMLRDDD.

Substrate contacts are provided by residues Asn69, Met98, Tyr127, His163, 185-187 (SRG), 226-229 (DACR), and Glu265. His269 is a binding site for Zn(2+). A substrate-binding site is contributed by Tyr292. Residue His333 coordinates Zn(2+). [4Fe-4S] cluster contacts are provided by Cys409, Cys412, and Cys416.

It belongs to the ThiC family. The cofactor is [4Fe-4S] cluster.

The catalysed reaction is 5-amino-1-(5-phospho-beta-D-ribosyl)imidazole + S-adenosyl-L-methionine = 4-amino-2-methyl-5-(phosphooxymethyl)pyrimidine + CO + 5'-deoxyadenosine + formate + L-methionine + 3 H(+). The protein operates within cofactor biosynthesis; thiamine diphosphate biosynthesis. Functionally, catalyzes the synthesis of the hydroxymethylpyrimidine phosphate (HMP-P) moiety of thiamine from aminoimidazole ribotide (AIR) in a radical S-adenosyl-L-methionine (SAM)-dependent reaction. The protein is Phosphomethylpyrimidine synthase of Clostridium botulinum (strain Loch Maree / Type A3).